The following is a 380-amino-acid chain: Protein arginine N-methyltransferase PRMT10 (380 aa).

The SAM-dependent MTase PRMT-type domain occupies 26–357; it reads EVDFANYFCT…KENHRLMDME (332 aa). S-adenosyl-L-methionine contacts are provided by glutamine 42, arginine 51, glycine 75, glutamate 97, and glutamate 126. Active-site residues include glutamate 140 and glutamate 149. The interval 187 to 227 is dimerization arm; sequence ENKMEDLEIAMHDWNLFVEDTESYYGVNMNVLTKAYRAEHE.

Belongs to the class I-like SAM-binding methyltransferase superfamily. Protein arginine N-methyltransferase family. In terms of assembly, ring-like homodimer.

The catalysed reaction is L-arginyl-[protein] + 2 S-adenosyl-L-methionine = N(omega),N(omega)-dimethyl-L-arginyl-[protein] + 2 S-adenosyl-L-homocysteine + 2 H(+). Methylates (mono and asymmetric dimethylation) the guanidino nitrogens of arginyl residues in some proteins. This is Protein arginine N-methyltransferase PRMT10 (PRMT10) from Oryza sativa subsp. japonica (Rice).